The following is a 340-amino-acid chain: L-threonine 3-dehydrogenase (340 aa).

Position 38 (Cys-38) interacts with Zn(2+). Residues Thr-40 and His-43 each act as charge relay system in the active site. Zn(2+)-binding residues include His-63, Glu-64, Cys-93, Cys-96, Cys-99, and Cys-107. NAD(+) is bound by residues Ile-175, Asp-195, Arg-200, 261–263 (LGI), and 285–286 (IY).

The protein belongs to the zinc-containing alcohol dehydrogenase family. In terms of assembly, homotetramer. It depends on Zn(2+) as a cofactor.

Its subcellular location is the cytoplasm. The catalysed reaction is L-threonine + NAD(+) = (2S)-2-amino-3-oxobutanoate + NADH + H(+). It functions in the pathway amino-acid degradation; L-threonine degradation via oxydo-reductase pathway; glycine from L-threonine: step 1/2. Catalyzes the NAD(+)-dependent oxidation of L-threonine to 2-amino-3-ketobutyrate. This chain is L-threonine 3-dehydrogenase, found in Xanthomonas euvesicatoria pv. vesicatoria (strain 85-10) (Xanthomonas campestris pv. vesicatoria).